We begin with the raw amino-acid sequence, 321 residues long: Cytochrome f (321 aa).

The first 38 residues, 1–38 (MINLFLLKYKTAFSTFLKPFAYLSLILSVCFYSIQAQA), serve as a signal peptide directing secretion. F39, C59, C62, and H63 together coordinate heme. A helical transmembrane segment spans residues 287–306 (VKGLIAFFFTVILAQILLVL).

It belongs to the cytochrome f family. As to quaternary structure, the 4 large subunits of the cytochrome b6-f complex are cytochrome b6, subunit IV (17 kDa polypeptide, petD), cytochrome f and the Rieske protein, while the 4 small subunits are PetG, PetL, PetM and PetN. The complex functions as a dimer. Requires heme as cofactor.

The protein localises to the plastid. It localises to the chloroplast thylakoid membrane. Component of the cytochrome b6-f complex, which mediates electron transfer between photosystem II (PSII) and photosystem I (PSI), cyclic electron flow around PSI, and state transitions. This Guillardia theta (Cryptophyte) protein is Cytochrome f (petA).